We begin with the raw amino-acid sequence, 213 residues long: ATP synthase peripheral stalk subunit OSCP, mitochondrial (213 aa).

Residues Met1 to Pro23 constitute a mitochondrion transit peptide. The short motif at Ala5–Pro23 is the SIFI-degron element. Residues Lys54, Lys60, Lys70, and Lys73 each carry the N6-acetyllysine modification. Lys90 carries the N6-succinyllysine modification. Residues Lys100, Lys158, and Lys162 each carry the N6-acetyllysine; alternate modification. An N6-succinyllysine; alternate mark is found at Lys100, Lys158, and Lys162. 3 positions are modified to N6-acetyllysine: Lys172, Lys176, and Lys192. Lys199 bears the N6-succinyllysine mark.

The protein belongs to the ATPase delta chain family. Component of the ATP synthase complex composed at least of ATP5F1A/subunit alpha, ATP5F1B/subunit beta, ATP5MC1/subunit c (homooctomer), MT-ATP6/subunit a, MT-ATP8/subunit 8, ATP5ME/subunit e, ATP5MF/subunit f, ATP5MG/subunit g, ATP5MK/subunit k, ATP5MJ/subunit j, ATP5F1C/subunit gamma, ATP5F1D/subunit delta, ATP5F1E/subunit epsilon, ATP5PF/subunit F6, ATP5PB/subunit b, ATP5PD/subunit d, ATP5PO/subunit OSCP. ATP synthase complex consists of a soluble F(1) head domain (subunits alpha(3) and beta(3)) - the catalytic core - and a membrane F(0) domain - the membrane proton channel (subunits c, a, 8, e, f, g, k and j). These two domains are linked by a central stalk (subunits gamma, delta, and epsilon) rotating inside the F1 region and a stationary peripheral stalk (subunits F6, b, d, and OSCP). Acetylation at Lys-162 decreases ATP production. Deacetylated by SIRT3. Post-translationally, in response to mitochondrial stress, the precursor protein is ubiquitinated by the SIFI complex in the cytoplasm before mitochondrial import, leading to its degradation. Within the SIFI complex, UBR4 initiates ubiquitin chain that are further elongated or branched by KCMF1.

It is found in the mitochondrion. The protein resides in the mitochondrion inner membrane. In terms of biological role, subunit OSCP, of the mitochondrial membrane ATP synthase complex (F(1)F(0) ATP synthase or Complex V) that produces ATP from ADP in the presence of a proton gradient across the membrane which is generated by electron transport complexes of the respiratory chain. ATP synthase complex consist of a soluble F(1) head domain - the catalytic core - and a membrane F(1) domain - the membrane proton channel. These two domains are linked by a central stalk rotating inside the F(1) region and a stationary peripheral stalk. During catalysis, ATP synthesis in the catalytic domain of F(1) is coupled via a rotary mechanism of the central stalk subunits to proton translocation. In vivo, can only synthesize ATP although its ATP hydrolase activity can be activated artificially in vitro. Part of the complex F(0) domain. Part of the complex F(0) domain and the peripheric stalk, which acts as a stator to hold the catalytic alpha(3)beta(3) subcomplex and subunit a/ATP6 static relative to the rotary elements. The chain is ATP synthase peripheral stalk subunit OSCP, mitochondrial from Bos taurus (Bovine).